The following is a 485-amino-acid chain: Putative E3 ubiquitin-protein ligase makorin-4 (485 aa).

The segment covering 1 to 32 (MAEAAAPGTTVTTSGAGAAAAEAAETAEAVSP) has biased composition (low complexity). The interval 1–63 (MAEAAAPGTT…GSDGSGGRGD (63 aa)) is disordered. Over residues 45–63 (AGGGVGGSDGSDGSGGRGD) the composition is skewed to gly residues. C3H1-type zinc fingers lie at residues 90–117 (WTKQ…HDLS), 124–146 (VCKY…HSKP), and 243–270 (ETKK…HGDL). Positions 271–298 (CDMCGLQVLHPMDAAQRSQHIQACIEAH) are makorin-type Cys-His. The RING-type zinc-finger motif lies at 316-370 (CGICMEVVYEKANPNEHRFGILSNCNHTFCLKCIRKWRSAKEFESRIVKSCPQCR). A C3H1-type 4 zinc finger spans residues 399–428 (AMSNKACKYFDEGRGSCPFGENCFYKHMYP).

The catalysed reaction is S-ubiquitinyl-[E2 ubiquitin-conjugating enzyme]-L-cysteine + [acceptor protein]-L-lysine = [E2 ubiquitin-conjugating enzyme]-L-cysteine + N(6)-ubiquitinyl-[acceptor protein]-L-lysine.. Its pathway is protein modification; protein ubiquitination. In terms of biological role, may act as a E3 ubiquitin ligase catalyzing the covalent attachment of ubiquitin moieties onto substrate proteins. The protein is Putative E3 ubiquitin-protein ligase makorin-4 (MKRN4P) of Homo sapiens (Human).